The sequence spans 406 residues: Tryptophan synthase beta chain (406 aa).

Residue Lys99 is modified to N6-(pyridoxal phosphate)lysine.

Belongs to the TrpB family. As to quaternary structure, tetramer of two alpha and two beta chains. The cofactor is pyridoxal 5'-phosphate.

The enzyme catalyses (1S,2R)-1-C-(indol-3-yl)glycerol 3-phosphate + L-serine = D-glyceraldehyde 3-phosphate + L-tryptophan + H2O. It participates in amino-acid biosynthesis; L-tryptophan biosynthesis; L-tryptophan from chorismate: step 5/5. Its function is as follows. The beta subunit is responsible for the synthesis of L-tryptophan from indole and L-serine. This Rhizobium etli (strain CIAT 652) protein is Tryptophan synthase beta chain.